Consider the following 168-residue polypeptide: ATP synthase subunit b (168 aa).

A helical membrane pass occupies residues 10-30 (LYLGDMLFYLVSFLIMAALVW). The segment at 61-80 (EAQKLAAKRQEELKGSRQEA) is disordered.

The protein belongs to the ATPase B chain family. F-type ATPases have 2 components, F(1) - the catalytic core - and F(0) - the membrane proton channel. F(1) has five subunits: alpha(3), beta(3), gamma(1), delta(1), epsilon(1). F(0) has three main subunits: a(1), b(2) and c(10-14). The alpha and beta chains form an alternating ring which encloses part of the gamma chain. F(1) is attached to F(0) by a central stalk formed by the gamma and epsilon chains, while a peripheral stalk is formed by the delta and b chains.

The protein localises to the cell membrane. F(1)F(0) ATP synthase produces ATP from ADP in the presence of a proton or sodium gradient. F-type ATPases consist of two structural domains, F(1) containing the extramembraneous catalytic core and F(0) containing the membrane proton channel, linked together by a central stalk and a peripheral stalk. During catalysis, ATP synthesis in the catalytic domain of F(1) is coupled via a rotary mechanism of the central stalk subunits to proton translocation. Its function is as follows. Component of the F(0) channel, it forms part of the peripheral stalk, linking F(1) to F(0). This chain is ATP synthase subunit b, found in Limosilactobacillus fermentum (strain NBRC 3956 / LMG 18251) (Lactobacillus fermentum).